We begin with the raw amino-acid sequence, 172 residues long: Putative acetyltransferase YvoF (172 aa).

The protein belongs to the transferase hexapeptide repeat family.

This is Putative acetyltransferase YvoF (yvoF) from Bacillus subtilis (strain 168).